The following is a 272-amino-acid chain: 3-methyl-2-oxobutanoate hydroxymethyltransferase (272 aa).

2 residues coordinate Mg(2+): D43 and D82. 3-methyl-2-oxobutanoate-binding positions include D43 to S44, D82, and K112. A Mg(2+)-binding site is contributed by E114. The active-site Proton acceptor is the E179.

It belongs to the PanB family. In terms of assembly, homodecamer; pentamer of dimers. Requires Mg(2+) as cofactor.

It localises to the cytoplasm. It carries out the reaction 3-methyl-2-oxobutanoate + (6R)-5,10-methylene-5,6,7,8-tetrahydrofolate + H2O = 2-dehydropantoate + (6S)-5,6,7,8-tetrahydrofolate. The protein operates within cofactor biosynthesis; (R)-pantothenate biosynthesis; (R)-pantoate from 3-methyl-2-oxobutanoate: step 1/2. Catalyzes the reversible reaction in which hydroxymethyl group from 5,10-methylenetetrahydrofolate is transferred onto alpha-ketoisovalerate to form ketopantoate. In Staphylococcus aureus (strain MRSA252), this protein is 3-methyl-2-oxobutanoate hydroxymethyltransferase.